The following is a 407-amino-acid chain: 8-amino-7-oxononanoate synthase (407 aa).

R24 serves as a coordination point for substrate. Position 111–112 (111–112 (GF)) interacts with pyridoxal 5'-phosphate. H137 contacts substrate. Residues S183, H211, and T239 each contribute to the pyridoxal 5'-phosphate site. K242 bears the N6-(pyridoxal phosphate)lysine mark. Substrate is bound at residue T356.

This sequence belongs to the class-II pyridoxal-phosphate-dependent aminotransferase family. BioF subfamily. In terms of assembly, homodimer. Pyridoxal 5'-phosphate serves as cofactor.

The catalysed reaction is 6-carboxyhexanoyl-[ACP] + L-alanine + H(+) = (8S)-8-amino-7-oxononanoate + holo-[ACP] + CO2. The protein operates within cofactor biosynthesis; biotin biosynthesis. Its function is as follows. Catalyzes the decarboxylative condensation of pimeloyl-[acyl-carrier protein] and L-alanine to produce 8-amino-7-oxononanoate (AON), [acyl-carrier protein], and carbon dioxide. The sequence is that of 8-amino-7-oxononanoate synthase from Stenotrophomonas maltophilia (strain R551-3).